The primary structure comprises 346 residues: tRNA N6-adenosine threonylcarbamoyltransferase (346 aa).

Residues His-111 and His-115 each contribute to the Fe cation site. Substrate contacts are provided by residues 134-138, Asp-167, Gly-180, and Asn-277; that span reads LVSGG. Asp-305 is a Fe cation binding site.

Belongs to the KAE1 / TsaD family. It depends on Fe(2+) as a cofactor.

It is found in the cytoplasm. The enzyme catalyses L-threonylcarbamoyladenylate + adenosine(37) in tRNA = N(6)-L-threonylcarbamoyladenosine(37) in tRNA + AMP + H(+). Required for the formation of a threonylcarbamoyl group on adenosine at position 37 (t(6)A37) in tRNAs that read codons beginning with adenine. Is involved in the transfer of the threonylcarbamoyl moiety of threonylcarbamoyl-AMP (TC-AMP) to the N6 group of A37, together with TsaE and TsaB. TsaD likely plays a direct catalytic role in this reaction. The chain is tRNA N6-adenosine threonylcarbamoyltransferase from Bordetella pertussis (strain Tohama I / ATCC BAA-589 / NCTC 13251).